The following is a 322-amino-acid chain: MTSNFFPYKEGTATFLIDPYVRVYPIAILMGMIISILTVAFFWRKEKFNFDHFFALLFIIIPSSIIGARLWFVFERLIYNPQNPFPGSAWYAIWEGGLSIQGGVALPAILSLVYIYFKRDYIDYRKALSMILPTVLIGQAIGRWGNFANHEVYGKIDPTGQSSLIFGEWLARHMFIYNANESAASAAFRYPLFLYESISSIIGYIIIVWIIQERNLLKPGSNGGLYFVYYGTVRLAMEPLREESYFYYSLAAMFSILIGGMMMIYFEIWANPSRYVKTKIGKFRYQYDWTKVVVDKKDKKIKFQSNNNKNKTEGKIKKYVTK.

Helical transmembrane passes span valine 23–tryptophan 43, phenylalanine 53–valine 73, and glycine 97–phenylalanine 117. A 1,2-diacyl-sn-glycero-3-phospho-(1'-sn-glycerol) is bound at residue arginine 143. A run of 2 helical transmembrane segments spans residues proline 191–isoleucine 211 and leucine 250–alanine 270.

The protein belongs to the Lgt family.

Its subcellular location is the cell membrane. It catalyses the reaction L-cysteinyl-[prolipoprotein] + a 1,2-diacyl-sn-glycero-3-phospho-(1'-sn-glycerol) = an S-1,2-diacyl-sn-glyceryl-L-cysteinyl-[prolipoprotein] + sn-glycerol 1-phosphate + H(+). Its pathway is protein modification; lipoprotein biosynthesis (diacylglyceryl transfer). In terms of biological role, catalyzes the transfer of the diacylglyceryl group from phosphatidylglycerol to the sulfhydryl group of the N-terminal cysteine of a prolipoprotein, the first step in the formation of mature lipoproteins. The protein is Phosphatidylglycerol--prolipoprotein diacylglyceryl transferase of Mycoplasmopsis pulmonis (strain UAB CTIP) (Mycoplasma pulmonis).